The sequence spans 434 residues: RHOMBOID-like protein 9, chloroplastic (434 aa).

A chloroplast-targeting transit peptide spans methionine 1–arginine 68. 8 helical membrane-spanning segments follow: residues phenylalanine 182 to alanine 202, methionine 209 to glycine 229, methionine 238 to glycine 258, leucine 267 to leucine 287, threonine 289 to valine 309, leucine 326 to isoleucine 346, leucine 352 to glycine 372, and phenylalanine 399 to glycine 419.

The protein belongs to the peptidase S54 family.

The protein localises to the plastid. Its subcellular location is the chloroplast membrane. In terms of biological role, probable rhomboid-type serine protease that catalyzes intramembrane proteolysis. This chain is RHOMBOID-like protein 9, chloroplastic, found in Arabidopsis thaliana (Mouse-ear cress).